Reading from the N-terminus, the 223-residue chain is Transmembrane protein 114 (223 aa).

The chain crosses the membrane as a helical span at residues 7–27 (GLAGAAALTGALSFVLLAAAI). N-linked (GlcNAc...) asparagine glycosylation is found at Asn55 and Asn89. 3 consecutive transmembrane segments (helical) span residues 106–126 (FVIL…TGFL), 134–154 (LLLL…LAGI), and 189–209 (LALG…FLAA).

Belongs to the PMP-22/EMP/MP20 family.

The protein localises to the cell junction. The protein resides in the tight junction. It localises to the lateral cell membrane. It is found in the apical cell membrane. The sequence is that of Transmembrane protein 114 from Homo sapiens (Human).